A 307-amino-acid chain; its full sequence is MPSEHPFSDGISTPNPKETMNDTAQITASYGRRYIVRTPDGTTYEASTRKKRVDFACGDRVRISPVNAEQVVIEDFLPRQSLLYRQDAWKTKLIAANVTQLLIVTAAVPSPSMRLLQRALLAAEAAGIEAVIVLNKADLPETALWREKLKFYETLGYPVIETRALENADLLRPVLQGHSNILLGQSGMGKSTLTNALLGSQTARTGDISAALDSGKHTTTHARLYDLNGETQLIDSPGLQEFGLHHLQAADLPRYFPDFRHLVGQCRFHNCTHRAEPGCAFKAAAETGAASPERLAFLQGITDELPG.

The tract at residues 1 to 20 (MPSEHPFSDGISTPNPKETM) is disordered. Residues 10-20 (GISTPNPKETM) show a composition bias toward polar residues. The region spanning 85–242 (RQDAWKTKLI…LIDSPGLQEF (158 aa)) is the CP-type G domain. Residues 135–138 (NKAD) and 184–192 (GQSGMGKST) each bind GTP. Zn(2+)-binding residues include Cys-266, Cys-271, His-273, and Cys-279.

Belongs to the TRAFAC class YlqF/YawG GTPase family. RsgA subfamily. As to quaternary structure, monomer. Associates with 30S ribosomal subunit, binds 16S rRNA. Requires Zn(2+) as cofactor.

It localises to the cytoplasm. One of several proteins that assist in the late maturation steps of the functional core of the 30S ribosomal subunit. Helps release RbfA from mature subunits. May play a role in the assembly of ribosomal proteins into the subunit. Circularly permuted GTPase that catalyzes slow GTP hydrolysis, GTPase activity is stimulated by the 30S ribosomal subunit. In Neisseria meningitidis serogroup C / serotype 2a (strain ATCC 700532 / DSM 15464 / FAM18), this protein is Small ribosomal subunit biogenesis GTPase RsgA.